Here is a 202-residue protein sequence, read N- to C-terminus: NADH-quinone oxidoreductase subunit C (202 aa).

It belongs to the complex I 30 kDa subunit family. NDH-1 is composed of 14 different subunits. Subunits NuoB, C, D, E, F, and G constitute the peripheral sector of the complex.

It is found in the cell inner membrane. It carries out the reaction a quinone + NADH + 5 H(+)(in) = a quinol + NAD(+) + 4 H(+)(out). NDH-1 shuttles electrons from NADH, via FMN and iron-sulfur (Fe-S) centers, to quinones in the respiratory chain. The immediate electron acceptor for the enzyme in this species is believed to be ubiquinone. Couples the redox reaction to proton translocation (for every two electrons transferred, four hydrogen ions are translocated across the cytoplasmic membrane), and thus conserves the redox energy in a proton gradient. The polypeptide is NADH-quinone oxidoreductase subunit C (Brucella abortus (strain 2308)).